Consider the following 205-residue polypeptide: Inactive ribonuclease-like protein 9 (205 aa).

The first 26 residues, 1 to 26 (MMRTLITTHPLPLLLLPQQLLQLVQF), serve as a signal peptide directing secretion. 2 disulfides stabilise this stretch: Cys-116–Cys-168 and Cys-123–Cys-130. Asn-131 and Asn-143 each carry an N-linked (GlcNAc...) asparagine glycan.

Belongs to the pancreatic ribonuclease family. At the mRNA level, widely expressed. At protein level, restricted to epididymis. Expressed in spermatozoa (sperm head and neck), with higher levels on ejaculated and epididymal sperm than on testicular sperm (at protein level). Expressed in the epithelial cells of the epididymal tubule (at protein level). Not detected in muscle.

Its subcellular location is the secreted. Functionally, does not exhibit any ribonuclease activity. This Homo sapiens (Human) protein is Inactive ribonuclease-like protein 9 (RNASE9).